Reading from the N-terminus, the 356-residue chain is Mitogen-activated protein kinase PMK1 (356 aa).

The Protein kinase domain maps to 24–312 (YDIQDVVGEG…VEEALKHPYL (289 aa)). ATP is bound by residues 30-38 (VGEGAYGVV) and Lys53.

It belongs to the protein kinase superfamily. CMGC Ser/Thr protein kinase family. MAP kinase subfamily. The cofactor is Mg(2+). Post-translationally, phosphorylated by MST7.

It catalyses the reaction L-seryl-[protein] + ATP = O-phospho-L-seryl-[protein] + ADP + H(+). It carries out the reaction L-threonyl-[protein] + ATP = O-phospho-L-threonyl-[protein] + ADP + H(+). Its function is as follows. Mitogen-activated protein kinase; part of the MST11-MST7-PMK1 MAP kinase (MAPK) cascade that is essential for appressorium formation, penetration and invasive growth. Central regulator of appressorium development that acts downstream of the cAMP signal. The MST11-MST7-PMK1 MAP kinase cascade transduces signals from the cell surface sensors MDB2 and SHO1 that recognize various surface signals such as surface hydrophobicity, cutin monomers, and rice leaf waxes. Regulates expression of secreted fungal effector proteins implicated of host immune defenses, preventing reactive oxygen species generation and excessive callose deposition at plasmodesmata. Furthermore, controls the hyphal constriction required for fungal growth from one rice cell to the neighboring cell, enabling host tissue colonization and blast disease. Targets downstream of the PMK1-MAPK pathway include transcription factor MST12 and pathogenicity-related genes GAS1 and GAS2, both of which are expressed during appressorium formation, even if regulation of MST12 is not associated with expression of GAS1 or GAS2. This is Mitogen-activated protein kinase PMK1 from Pyricularia oryzae (Rice blast fungus).